We begin with the raw amino-acid sequence, 639 residues long: Chaperone protein DnaK (639 aa).

Thr-198 carries the post-translational modification Phosphothreonine; by autocatalysis. The interval 602 to 639 (QAKSQAQGGDNADAGKQANATADDVVDAEFEEVKDDKK) is disordered. The segment covering 625-639 (DVVDAEFEEVKDDKK) has biased composition (acidic residues).

It belongs to the heat shock protein 70 family.

In terms of biological role, acts as a chaperone. This is Chaperone protein DnaK from Shewanella baltica (strain OS155 / ATCC BAA-1091).